Reading from the N-terminus, the 102-residue chain is Phosphoribosyl-ATP pyrophosphatase (102 aa).

It belongs to the PRA-PH family.

It is found in the cytoplasm. The catalysed reaction is 1-(5-phospho-beta-D-ribosyl)-ATP + H2O = 1-(5-phospho-beta-D-ribosyl)-5'-AMP + diphosphate + H(+). The protein operates within amino-acid biosynthesis; L-histidine biosynthesis; L-histidine from 5-phospho-alpha-D-ribose 1-diphosphate: step 2/9. This chain is Phosphoribosyl-ATP pyrophosphatase, found in Ignicoccus hospitalis (strain KIN4/I / DSM 18386 / JCM 14125).